A 328-amino-acid polypeptide reads, in one-letter code: Phosphate acyltransferase (328 aa).

It belongs to the PlsX family. In terms of assembly, homodimer. Probably interacts with PlsY.

The protein localises to the cytoplasm. It catalyses the reaction a fatty acyl-[ACP] + phosphate = an acyl phosphate + holo-[ACP]. It participates in lipid metabolism; phospholipid metabolism. Functionally, catalyzes the reversible formation of acyl-phosphate (acyl-PO(4)) from acyl-[acyl-carrier-protein] (acyl-ACP). This enzyme utilizes acyl-ACP as fatty acyl donor, but not acyl-CoA. This is Phosphate acyltransferase from Campylobacter jejuni subsp. doylei (strain ATCC BAA-1458 / RM4099 / 269.97).